The following is a 381-amino-acid chain: Chaperone protein DnaJ (381 aa).

Residues aspartate 4–glycine 69 enclose the J domain. The CR-type zinc-finger motif lies at glycine 139–threonine 221. Positions 152, 155, 169, 172, 195, 198, 209, and 212 each coordinate Zn(2+). CXXCXGXG motif repeat units follow at residues cysteine 152 to glycine 159, cysteine 169 to glycine 176, cysteine 195 to glycine 202, and cysteine 209 to glycine 216.

It belongs to the DnaJ family. In terms of assembly, homodimer. Zn(2+) is required as a cofactor.

It is found in the cytoplasm. Its function is as follows. Participates actively in the response to hyperosmotic and heat shock by preventing the aggregation of stress-denatured proteins and by disaggregating proteins, also in an autonomous, DnaK-independent fashion. Unfolded proteins bind initially to DnaJ; upon interaction with the DnaJ-bound protein, DnaK hydrolyzes its bound ATP, resulting in the formation of a stable complex. GrpE releases ADP from DnaK; ATP binding to DnaK triggers the release of the substrate protein, thus completing the reaction cycle. Several rounds of ATP-dependent interactions between DnaJ, DnaK and GrpE are required for fully efficient folding. Also involved, together with DnaK and GrpE, in the DNA replication of plasmids through activation of initiation proteins. The chain is Chaperone protein DnaJ from Carboxydothermus hydrogenoformans (strain ATCC BAA-161 / DSM 6008 / Z-2901).